A 20-amino-acid polypeptide reads, in one-letter code: Lysozyme (20 aa).

Monomer.

It localises to the secreted. It catalyses the reaction Hydrolysis of (1-&gt;4)-beta-linkages between N-acetylmuramic acid and N-acetyl-D-glucosamine residues in a peptidoglycan and between N-acetyl-D-glucosamine residues in chitodextrins.. Has bacteriolytic activity. The sequence is that of Lysozyme from Lysobacter sp. (strain XL1).